Consider the following 102-residue polypeptide: ATP-dependent Clp protease adapter protein ClpS (102 aa).

This sequence belongs to the ClpS family. Binds to the N-terminal domain of the chaperone ClpA.

Involved in the modulation of the specificity of the ClpAP-mediated ATP-dependent protein degradation. This Desulfotalea psychrophila (strain LSv54 / DSM 12343) protein is ATP-dependent Clp protease adapter protein ClpS.